Here is a 1095-residue protein sequence, read N- to C-terminus: Tyrosine-sulfated glycopeptide receptor 1 (1095 aa).

The chain crosses the membrane as a helical span at residues 23-43 (PHMVLFVLLYVLSISVFFLTV). N-linked (GlcNAc...) asparagine glycans are attached at residues Asn62 and Asn73. 19 LRR repeats span residues 91 to 115 (ENRV…VLDL), 116 to 139 (QRLS…FLSA), 141 to 165 (DQLL…SFGN), 170 to 195 (IFPI…VFLQ), 197 to 221 (AFNL…MCTA), 223 to 246 (PQLT…LSRC), 247 to 270 (SRLS…IYNL), 271 to 294 (PELE…ITRL), 295 to 318 (TKLT…IGKL), 320 to 342 (KLSS…LANC), 344 to 366 (KLVK…DFSR), 367 to 391 (FQSL…VYSC), 393 to 415 (MMTA…VLEL), 416 to 439 (ESLS…SILQ), 441 to 466 (CKKL…DFLR), 470 to 494 (FPSL…LIKL), 495 to 517 (QRVE…WLGT), 518 to 542 (LPDL…LFQL), and 566 to 589 (NPNN…IYIK). N-linked (GlcNAc...) asparagine glycosylation is present at Asn165. Asn199, Asn204, and Asn207 each carry an N-linked (GlcNAc...) asparagine glycan. The N-linked (GlcNAc...) asparagine glycan is linked to Asn258. Asn341 carries an N-linked (GlcNAc...) asparagine glycan. A glycan (N-linked (GlcNAc...) asparagine) is linked at Asn377. Asn430 carries an N-linked (GlcNAc...) asparagine glycan. Residues Asn569, Asn592, Asn616, Asn627, Asn640, Asn662, and Asn714 are each glycosylated (N-linked (GlcNAc...) asparagine). 3 LRR repeats span residues 604 to 628 (LKVL…LSNL), 629 to 652 (TNLE…LTGL), and 654 to 677 (FLSY…QFDT). A helical transmembrane segment spans residues 721 to 741 (LVLGLFFGVSLILVLLALLVL). Phosphothreonine occurs at positions 792 and 800. The 272-residue stretch at 803 to 1074 (FSQANIIGCG…PNIQQVVDWL (272 aa)) folds into the Protein kinase domain. Residues 809–817 (IGCGGFGLV) and Lys831 contribute to the ATP site. Tyr876 and Tyr916 each carry phosphotyrosine. Asp929 serves as the catalytic Proton acceptor. Phosphotyrosine is present on Tyr971.

The protein belongs to the protein kinase superfamily. Ser/Thr protein kinase family. In terms of assembly, homo- and heterodimers with PSKR1. Interacts (via C-terminus) with AHA1 and AHA2 (via the R-domain). Post-translationally, autophosphorylated. As to expression, expressed ubiquitously, including in the shoot apical meristem and in the elongation zone of the root meristem.

Its subcellular location is the cell membrane. It carries out the reaction L-seryl-[protein] + ATP = O-phospho-L-seryl-[protein] + ADP + H(+). The catalysed reaction is L-threonyl-[protein] + ATP = O-phospho-L-threonyl-[protein] + ADP + H(+). Its function is as follows. Tyrosine-sulfated glycopeptide receptor with a serine/threonine-protein kinase activity. Regulates, in response to tyrosine-sulfated glycopeptide binding, a signaling cascade involved in cellular proliferation and plant growth. Not involved in PSK perception. Involved in plant immunity, with antagonistic effects on bacterial and fungal resistances. Mediates activation of the plasma membrane H(+)-ATPase by PSY1. Phosphorylates AHA2 at Thr-881. The sequence is that of Tyrosine-sulfated glycopeptide receptor 1 from Arabidopsis thaliana (Mouse-ear cress).